Consider the following 449-residue polypeptide: Asparagine--tRNA ligase (449 aa).

The protein belongs to the class-II aminoacyl-tRNA synthetase family. Homodimer.

It is found in the cytoplasm. The enzyme catalyses tRNA(Asn) + L-asparagine + ATP = L-asparaginyl-tRNA(Asn) + AMP + diphosphate + H(+). The sequence is that of Asparagine--tRNA ligase from Desulfotalea psychrophila (strain LSv54 / DSM 12343).